The sequence spans 451 residues: Trigger factor (451 aa).

One can recognise a PPIase FKBP-type domain in the interval 165-250 (DDKLTIDFEG…LHQIQAREAL (86 aa)).

The protein belongs to the FKBP-type PPIase family. Tig subfamily.

The protein localises to the cytoplasm. The catalysed reaction is [protein]-peptidylproline (omega=180) = [protein]-peptidylproline (omega=0). Functionally, involved in protein export. Acts as a chaperone by maintaining the newly synthesized protein in an open conformation. Functions as a peptidyl-prolyl cis-trans isomerase. This chain is Trigger factor, found in Helicobacter pylori (strain HPAG1).